We begin with the raw amino-acid sequence, 1043 residues long: Polycomb protein Pcl (1043 aa).

4 disordered regions span residues 1–34 (MMNN…SAPP), 271–302 (PDST…PLLA), 317–346 (FKTV…AAPS), and 395–422 (KLRK…NTSP). The segment covering 25-34 (PSTAVPSAPP) has biased composition (low complexity). The segment covering 324–344 (PPTPPTPPSPPPPPPAPPVAA) has biased composition (pro residues). Positions 349 to 404 (VTYALQEDVFIKCNDGRFYLGTIIDQTSDQYLIRFDDQSEQWCEPDKLRKLGGGSS) constitute a Tudor domain. Positions 399-412 (LGGGSSITAGGGGA) are enriched in gly residues. 2 consecutive PHD-type zinc fingers follow at residues 424 to 472 (GPMC…CAKP) and 512 to 560 (QIYC…VFCC). Residues 737-757 (AKKQAAQKADKHDELPLKPDL) show a composition bias toward basic and acidic residues. Disordered regions lie at residues 737–819 (AKKQ…TSSL) and 931–985 (AKDL…PGHS). Basic residues predominate over residues 783-792 (SRKRKAFRLS). Basic and acidic residues predominate over residues 793–804 (KRYDNSRNHCDL). Ser805 and Ser806 each carry phosphoserine. Over residues 807-819 (DENSSSSRGTSSL) the composition is skewed to low complexity. Residues 945-954 (THGRLLRQRP) are compositionally biased toward basic residues. The segment covering 955-977 (QKQSPSQSRRNSTSSTATSSSSN) has biased composition (low complexity).

The protein belongs to the Polycomblike family. As to quaternary structure, component of a form of the Esc/E(z) complex present specifically during early embryogenesis which is composed of Caf1-55, esc, E(z), Su(z)12, Pcl and HDAC1/Rpd3. This complex is distinct from the PRC1 complex, which contains many other PcG proteins like Pc, Ph, Psc, Su(z)2. The two complexes however cooperate and interact together during the first 3 hours of development to establish PcG silencing. Interacts with corto in vitro.

The protein localises to the nucleus. Its subcellular location is the chromosome. In terms of biological role, polycomb group (PcG) protein. While PcG proteins are generally required to maintain the transcriptionally repressive state of homeotic genes throughout development, this protein is specifically required during the first 6 hours of embryogenesis to establish the repressed state. Component of the Esc/E(z) complex, which methylates 'Lys-9' and 'Lys-27' residues of histone H3, leading to transcriptional repression of the affected target gene. The Esc/E(z) complex is necessary but not sufficient for the repression of homeotic target genes, suggesting that the recruitment of the distinct PRC1 complex is also required. Required for the correct spatial expression of the homeotic genes of the Antennapedia and Bithorax complexes. The polypeptide is Polycomb protein Pcl (Pcl) (Drosophila melanogaster (Fruit fly)).